The primary structure comprises 322 residues: Protein-L-isoaspartate O-methyltransferase (322 aa).

The tract at residues Met-1–Pro-101 is disordered. The span at Glu-14–Glu-29 shows a compositional bias: basic and acidic residues. Composition is skewed to low complexity over residues Ala-33–Ala-51 and His-76–Gly-91. Residue Ser-170 is part of the active site.

This sequence belongs to the methyltransferase superfamily. L-isoaspartyl/D-aspartyl protein methyltransferase family.

The protein resides in the cytoplasm. The enzyme catalyses [protein]-L-isoaspartate + S-adenosyl-L-methionine = [protein]-L-isoaspartate alpha-methyl ester + S-adenosyl-L-homocysteine. In terms of biological role, catalyzes the methyl esterification of L-isoaspartyl residues in peptides and proteins that result from spontaneous decomposition of normal L-aspartyl and L-asparaginyl residues. It plays a role in the repair and/or degradation of damaged proteins. In Burkholderia mallei (strain NCTC 10247), this protein is Protein-L-isoaspartate O-methyltransferase.